A 476-amino-acid polypeptide reads, in one-letter code: MTDTGSSDTNTDTTGTSKANTMWGGRFAAGPDAIMEAINASISFDQRMARQDIEGSRAHAAMLAATGIVESSDVDVIREGLLTVLSEIEGGTFQYSTALEDIHMNVEARLTEIIGTPAGRLHTARSRNDQVATDFKLWVRDQMDAAISGIEALQRALLGQAEAGADWVMPGFTHLQTAQPVTWGHHMMAYVEMLGRDASRFRDARTRMNESPLGAAALAGTSFPIDRDMTAEALGFDRPSANSLDAVADRDFALEFLSAASICAMHLSRFAEELVIWSSAQFRFVALSDRFSTGSSIMPQKKNPDAAELIRAKIGRIFGANVALMTVMKGLPLTYSKDMQEDKEQTFDAADNLMLALAAMEGMVRDMQANVPSLEAAASSGFSTATDLADWLVRELNMPFREAHHVTGSLVKLAEDKGCDLPDLALSDMHSVHGDITDGVFDVLGVHNSVASRTSYGGTSPVQVREQVARWRDILG.

Residues 1 to 17 (MTDTGSSDTNTDTTGTS) are compositionally biased toward low complexity. Residues 1-22 (MTDTGSSDTNTDTTGTSKANTM) are disordered.

Belongs to the lyase 1 family. Argininosuccinate lyase subfamily.

It localises to the cytoplasm. It catalyses the reaction 2-(N(omega)-L-arginino)succinate = fumarate + L-arginine. Its pathway is amino-acid biosynthesis; L-arginine biosynthesis; L-arginine from L-ornithine and carbamoyl phosphate: step 3/3. The polypeptide is Argininosuccinate lyase (Jannaschia sp. (strain CCS1)).